Consider the following 216-residue polypeptide: Ras-related protein Rab-5C (216 aa).

GTP contacts are provided by S30, A31, G33, K34, S35, S36, H47, E48, T53, G79, N134, K135, D137, A165, and K166. S35 is a binding site for Mg(2+). 2 consecutive short sequence motifs (switch) follow at residues 45-57 (QFHEYQESTIGAA) and 78-94 (AGQERYHSLAPMYYRGA). Mg(2+) is bound at residue T53. Positions 184-216 (KNEPQNAPGGPGRNRVVDLQESSQPSRSQCCSN) are disordered. Over residues 203 to 216 (QESSQPSRSQCCSN) the composition is skewed to polar residues. 2 S-geranylgeranyl cysteine lipidation sites follow: C213 and C214.

The protein belongs to the small GTPase superfamily. Rab family. Requires Mg(2+) as cofactor. Detected in brain, ovary, rectum, small intestine, large intestine, liver, spleen, follicle and kidney (at protein level).

The protein resides in the cell membrane. Its subcellular location is the early endosome membrane. It carries out the reaction GTP + H2O = GDP + phosphate + H(+). Its activity is regulated as follows. Regulated by guanine nucleotide exchange factors (GEFs) which promote the exchange of bound GDP for free GTP. Regulated by GTPase activating proteins (GAPs) which increase the GTP hydrolysis activity. Inhibited by GDP dissociation inhibitors (GDIs). Functionally, the small GTPases Rab are key regulators of intracellular membrane trafficking, from the formation of transport vesicles to their fusion with membranes. Rabs cycle between an inactive GDP-bound form and an active GTP-bound form that is able to recruit to membranes different sets of downstream effectors directly responsible for vesicle formation, movement, tethering and fusion. In Gallus gallus (Chicken), this protein is Ras-related protein Rab-5C (RAB5C).